Here is a 369-residue protein sequence, read N- to C-terminus: 3',5'-cyclic-nucleotide phosphodiesterase 1 (369 aa).

It belongs to the cyclic nucleotide phosphodiesterase class-II family.

The enzyme catalyses a nucleoside 3',5'-cyclic phosphate + H2O = a nucleoside 5'-phosphate + H(+). Its function is as follows. Controls the level of cAMP in yeast cells, together with the high-affinity cAMP phosphodiesterase (PDE2). The polypeptide is 3',5'-cyclic-nucleotide phosphodiesterase 1 (PDE1) (Saccharomyces cerevisiae (strain ATCC 204508 / S288c) (Baker's yeast)).